A 600-amino-acid chain; its full sequence is Zinc metalloproteinase-disintegrin-like stejnihagin-A (600 aa).

Residues 1 to 20 form the signal peptide; the sequence is MIEVLLVTICLAVFPYQGSS. The propeptide occupies 21-191; sequence IILESGNVND…KASQLVVTAE (171 aa). Q192 carries the pyrrolidone carboxylic acid modification. Residues 198–389 enclose the Peptidase M12B domain; that stretch reads RYVKLAIVAD…YNPQCILNAP (192 aa). Intrachain disulfides connect C306/C384, C346/C368, and C348/C351. N317 is a glycosylation site (N-linked (GlcNAc...) asparagine). H331 provides a ligand contact to Zn(2+). E332 is an active-site residue. Positions 335 and 341 each coordinate Zn(2+). N-linked (GlcNAc...) asparagine glycosylation occurs at N367. The Disintegrin domain maps to 397–483; that stretch reads PPVCGNELLE…DCPTDDFHRN (87 aa). Residues V399, N402, L404, E406, E409, and D412 each contribute to the Ca(2+) site. Intrachain disulfides connect C400/C429, C411/C424, C413/C419, C423/C446, C437/C443, C442/C468, C455/C475, C462/C494, C487/C499, C506/C556, C521/C565, C534/C544, C551/C587, and C581/C593. The D/ECD-tripeptide motif lies at 461-463; sequence ECD. A glycan (N-linked (GlcNAc...) asparagine) is linked at N568.

The protein belongs to the venom metalloproteinase (M12B) family. P-III subfamily. P-IIIa sub-subfamily. Monomer. Zn(2+) is required as a cofactor. In terms of tissue distribution, expressed by the venom gland.

The protein resides in the secreted. Functionally, this metalloproteinase-disintegrin-like impairs hemostasis in the envenomed animal. This is Zinc metalloproteinase-disintegrin-like stejnihagin-A from Trimeresurus stejnegeri (Chinese green tree viper).